Reading from the N-terminus, the 326-residue chain is Malate dehydrogenase (326 aa).

Residue Gly11 to Gly17 coordinates NAD(+). 2 residues coordinate substrate: Arg92 and Arg98. NAD(+)-binding positions include Asn105, Gln112, and Val129–Asn131. Asn131 and Arg162 together coordinate substrate. The active-site Proton acceptor is the His187.

This sequence belongs to the LDH/MDH superfamily. MDH type 2 family.

The catalysed reaction is (S)-malate + NAD(+) = oxaloacetate + NADH + H(+). In terms of biological role, catalyzes the reversible oxidation of malate to oxaloacetate. The sequence is that of Malate dehydrogenase from Leptospira interrogans serogroup Icterohaemorrhagiae serovar Lai (strain 56601).